The primary structure comprises 388 residues: Chaperone protein DnaJ (388 aa).

In terms of domain architecture, J spans 5 to 69 (DYYDVLGVDK…QKRAQYDQFG (65 aa)). A CR-type zinc finger spans residues 145–227 (GKKTDITYTR…CHGQGTVDKK (83 aa)). Positions 158, 161, 175, 178, 201, 204, 215, and 218 each coordinate Zn(2+). 4 CXXCXGXG motif repeats span residues 158-165 (CPTCDGSG), 175-182 (CDKCHGSG), 201-208 (CDKCGGRG), and 215-222 (CQTCHGQG).

The protein belongs to the DnaJ family. As to quaternary structure, homodimer. The cofactor is Zn(2+).

Its subcellular location is the cytoplasm. Participates actively in the response to hyperosmotic and heat shock by preventing the aggregation of stress-denatured proteins and by disaggregating proteins, also in an autonomous, DnaK-independent fashion. Unfolded proteins bind initially to DnaJ; upon interaction with the DnaJ-bound protein, DnaK hydrolyzes its bound ATP, resulting in the formation of a stable complex. GrpE releases ADP from DnaK; ATP binding to DnaK triggers the release of the substrate protein, thus completing the reaction cycle. Several rounds of ATP-dependent interactions between DnaJ, DnaK and GrpE are required for fully efficient folding. Also involved, together with DnaK and GrpE, in the DNA replication of plasmids through activation of initiation proteins. The sequence is that of Chaperone protein DnaJ from Lactobacillus johnsonii (strain CNCM I-12250 / La1 / NCC 533).